A 326-amino-acid polypeptide reads, in one-letter code: NAD-dependent protein deacylase SIR5 (326 aa).

Residues 1-26 constitute a mitochondrion transit peptide; sequence MRLLRPTPRLSSIFSSKTATSNLRFF. In terms of domain architecture, Deacetylase sirtuin-type spans 28-324; the sequence is AMAPHNDVGA…IGKLETDKKE (297 aa). Position 53 to 72 (53 to 72) interacts with NAD(+); the sequence is GAGLSASSGLPTFRGAGGLW. Substrate-binding residues include Y97 and R100. H151 (proton acceptor) is an active-site residue. Zn(2+) is bound by residues C159, C162, C211, and C214.

This sequence belongs to the sirtuin family. Class I subfamily. As to quaternary structure, interacts with LAT1; the interaction is direct. Requires Zn(2+) as cofactor.

The protein localises to the mitochondrion. It localises to the cytoplasm. The protein resides in the cytosol. Its subcellular location is the nucleus. It is found in the chromosome. The catalysed reaction is N(6)-acetyl-L-lysyl-[protein] + NAD(+) + H2O = 2''-O-acetyl-ADP-D-ribose + nicotinamide + L-lysyl-[protein]. It carries out the reaction N(6)-(2E)-butenoyl-L-lysyl-[protein] + H2O = (2E)-2-butenoate + L-lysyl-[protein]. NAD-dependent protein-lysine deacylase that decrotonylates the PDC (pyruvate dehydrogenase complex) subunit LAT1 at 'Lys-148' to inhibit PDC activity and consequently ATP production. Also decrotonylates histone H3 crotonylated at 'Lys-18' (H3K18cr), to repress the expression of genes involved in aerobic respiration. May also act as a NAD-dependent deacetylase. Does not mediate desuccinylation, demalonylation, or deglutarylation of LAT1. The sequence is that of NAD-dependent protein deacylase SIR5 from Fusarium oxysporum f. sp. lycopersici (strain 4287 / CBS 123668 / FGSC 9935 / NRRL 34936) (Fusarium vascular wilt of tomato).